A 393-amino-acid chain; its full sequence is MTVPDARKDLLVVNMGPHHPSMHGVLRLIVTLDGEDVIDCEPILGYLHRGMEKIAENRTIIQYLPYVTRWDYLATMFTEAITVNAPEELGNIQVPKRASYIRVIMLELSRIASHLLWLGPFMADIGAQTPFFYIFRERELLYDLFEAATGMRMMHNYFRIGGVAADLPHGWIDKCLDFCDYFLTGVVEYQKLITRNPIFLERVEGVGFIGGEEAINWGLSGPMLRASGIQWDLRKVDRYECYDEFDWEVQWQKEGDSLARYLVRIGEMTESIKIIQQALEGIPGGPYENLEFRRFAGTKDSELNDFEYRFISKKPSPSFELSKQELYVRVEAPKGELGIFLIGDNSVFPWRWKIRPPGFINLQILPQLVKRMKLADIMTILGSIDIIMGEVDR.

Belongs to the complex I 49 kDa subunit family. As to quaternary structure, NDH is composed of at least 16 different subunits, 5 of which are encoded in the nucleus.

Its subcellular location is the plastid. The protein resides in the chloroplast thylakoid membrane. It carries out the reaction a plastoquinone + NADH + (n+1) H(+)(in) = a plastoquinol + NAD(+) + n H(+)(out). The catalysed reaction is a plastoquinone + NADPH + (n+1) H(+)(in) = a plastoquinol + NADP(+) + n H(+)(out). NDH shuttles electrons from NAD(P)H:plastoquinone, via FMN and iron-sulfur (Fe-S) centers, to quinones in the photosynthetic chain and possibly in a chloroplast respiratory chain. The immediate electron acceptor for the enzyme in this species is believed to be plastoquinone. Couples the redox reaction to proton translocation, and thus conserves the redox energy in a proton gradient. The polypeptide is NAD(P)H-quinone oxidoreductase subunit H, chloroplastic (Nuphar advena (Common spatterdock)).